Here is a 174-residue protein sequence, read N- to C-terminus: Nucleoside-triphosphatase THEP1 (174 aa).

ATP contacts are provided by residues 7 to 14 (GRPGSGKS) and 98 to 105 (CIIIDEIG).

This sequence belongs to the THEP1 NTPase family.

It catalyses the reaction a ribonucleoside 5'-triphosphate + H2O = a ribonucleoside 5'-diphosphate + phosphate + H(+). In terms of biological role, has nucleotide phosphatase activity towards ATP, GTP, CTP, TTP and UTP. May hydrolyze nucleoside diphosphates with lower efficiency. This chain is Nucleoside-triphosphatase THEP1, found in Methanothermobacter thermautotrophicus (strain ATCC 29096 / DSM 1053 / JCM 10044 / NBRC 100330 / Delta H) (Methanobacterium thermoautotrophicum).